The following is a 71-amino-acid chain: Large ribosomal subunit protein uL30 (71 aa).

The protein belongs to the universal ribosomal protein uL30 family. As to quaternary structure, part of the 50S ribosomal subunit.

This chain is Large ribosomal subunit protein uL30, found in Mycolicibacterium paratuberculosis (strain ATCC BAA-968 / K-10) (Mycobacterium paratuberculosis).